A 365-amino-acid chain; its full sequence is tRNA-specific 2-thiouridylase MnmA (365 aa).

Residues 6–13 (AMSGGVDS) and Leu-32 each bind ATP. Cys-101 functions as the Nucleophile in the catalytic mechanism. A disulfide bond links Cys-101 and Cys-199. Residue Gly-125 coordinates ATP. An interaction with tRNA region spans residues 149 to 151 (KDQ). Cys-199 functions as the Cysteine persulfide intermediate in the catalytic mechanism.

The protein belongs to the MnmA/TRMU family.

The protein localises to the cytoplasm. It carries out the reaction S-sulfanyl-L-cysteinyl-[protein] + uridine(34) in tRNA + AH2 + ATP = 2-thiouridine(34) in tRNA + L-cysteinyl-[protein] + A + AMP + diphosphate + H(+). Functionally, catalyzes the 2-thiolation of uridine at the wobble position (U34) of tRNA, leading to the formation of s(2)U34. The protein is tRNA-specific 2-thiouridylase MnmA of Corynebacterium efficiens (strain DSM 44549 / YS-314 / AJ 12310 / JCM 11189 / NBRC 100395).